Reading from the N-terminus, the 383-residue chain is MRNWLLPEYIADILPATARQVESAKAAMLEGFRVAGYELVLPPLIEYIDSLVSEGDDTLDLKTFKLDDQLSGRQLGLRADITPQVARIDAHLLGERTGVTRLCYAGSVVHSRPSGLTSSREPLQVGAELYGYAGIEADQEIIELMLATLEKAGVKKLRLDVGHIAIYRGLAAAAGLSPEVSRELFGLLQNKDAAGIAARVAGVAEPYKSAFLALPELYGPAAVLEKARTRLPSLPEVELGLMQLSAIARAMEGRVELSFDLAELRGDFYHTGLMFAAYAPGWSDAIARGGRYDNVGRRFGRARPATGFSLDLRDLLRILPERDPSRGIRVSARHLPAAAAEVSRLRAEGEMVVVDYLGESAAALNCDRELVPAADGWQLAPFH.

It belongs to the class-II aminoacyl-tRNA synthetase family. HisZ subfamily. In terms of assembly, heteromultimer composed of HisG and HisZ subunits.

It localises to the cytoplasm. The protein operates within amino-acid biosynthesis; L-histidine biosynthesis; L-histidine from 5-phospho-alpha-D-ribose 1-diphosphate: step 1/9. Functionally, required for the first step of histidine biosynthesis. May allow the feedback regulation of ATP phosphoribosyltransferase activity by histidine. The protein is ATP phosphoribosyltransferase regulatory subunit of Chromobacterium violaceum (strain ATCC 12472 / DSM 30191 / JCM 1249 / CCUG 213 / NBRC 12614 / NCIMB 9131 / NCTC 9757 / MK).